The chain runs to 462 residues: Zinc finger CCCH domain-containing protein 34 (462 aa).

The span at 1 to 13 (MERYGRPGEEGSR) shows a compositional bias: basic and acidic residues. A disordered region spans residues 1-26 (MERYGRPGEEGSRSDPSLEWTSHGGE). 3 C3H1-type zinc fingers span residues 54 to 82 (RPDEPDCIYYLRTGVCGYGSRCRFNHPRD), 100 to 128 (RMGHPVCQHFMRTGTCKFGASCKYHHPRQ), and 148 to 176 (RPGEKECSYYLRTGQCKFGLTCRFNHPVP). Over residues 288-303 (TGTYQSVPSSNSTSKE) the composition is skewed to polar residues. A disordered region spans residues 288–310 (TGTYQSVPSSNSTSKEFPQRPDQ). 2 consecutive C3H1-type zinc fingers follow at residues 307–335 (RPDQPECQYFMRTGDCKFGSSCRYHHPVD) and 353–381 (RPGVAQCTHFAQHGICKFGPACKFDHSMS). Residues 405-418 (SSSLSGSSAPVSSS) are compositionally biased toward low complexity. Residues 405 to 462 (SSSLSGSSAPVSSSNEPTKEAVTPAVSSMVSGLSRPEPAETSGDSASVSGSIEAKTSS) form a disordered region. Polar residues predominate over residues 446–462 (SGDSASVSGSIEAKTSS).

The protein resides in the nucleus. This Arabidopsis thaliana (Mouse-ear cress) protein is Zinc finger CCCH domain-containing protein 34.